Here is a 129-residue protein sequence, read N- to C-terminus: Large ribosomal subunit protein bL12 (129 aa).

The protein belongs to the bacterial ribosomal protein bL12 family. In terms of assembly, homodimer. Part of the ribosomal stalk of the 50S ribosomal subunit. Forms a multimeric L10(L12)X complex, where L10 forms an elongated spine to which 2 to 4 L12 dimers bind in a sequential fashion. Binds GTP-bound translation factors.

In terms of biological role, forms part of the ribosomal stalk which helps the ribosome interact with GTP-bound translation factors. Is thus essential for accurate translation. The sequence is that of Large ribosomal subunit protein bL12 from Maridesulfovibrio salexigens (strain ATCC 14822 / DSM 2638 / NCIMB 8403 / VKM B-1763) (Desulfovibrio salexigens).